Here is a 238-residue protein sequence, read N- to C-terminus: tRNA (guanine-N(1)-)-methyltransferase (238 aa).

Residues Gly112 and 131-136 (LGDFIL) each bind S-adenosyl-L-methionine.

It belongs to the RNA methyltransferase TrmD family. As to quaternary structure, homodimer.

It localises to the cytoplasm. It catalyses the reaction guanosine(37) in tRNA + S-adenosyl-L-methionine = N(1)-methylguanosine(37) in tRNA + S-adenosyl-L-homocysteine + H(+). Its function is as follows. Specifically methylates guanosine-37 in various tRNAs. This chain is tRNA (guanine-N(1)-)-methyltransferase, found in Nostoc punctiforme (strain ATCC 29133 / PCC 73102).